Consider the following 274-residue polypeptide: Large ribosomal subunit protein uL2 (274 aa).

The tract at residues 1-23 (MAIKIYRPTSPGRRHHSVSSFEE) is disordered.

This sequence belongs to the universal ribosomal protein uL2 family. As to quaternary structure, part of the 50S ribosomal subunit. Forms a bridge to the 30S subunit in the 70S ribosome.

In terms of biological role, one of the primary rRNA binding proteins. Required for association of the 30S and 50S subunits to form the 70S ribosome, for tRNA binding and peptide bond formation. It has been suggested to have peptidyltransferase activity; this is somewhat controversial. Makes several contacts with the 16S rRNA in the 70S ribosome. The sequence is that of Large ribosomal subunit protein uL2 from Dehalococcoides mccartyi (strain ATCC BAA-2100 / JCM 16839 / KCTC 5957 / BAV1).